Here is a 284-residue protein sequence, read N- to C-terminus: 2,3,4,5-tetrahydropyridine-2,6-dicarboxylate N-succinyltransferase (284 aa).

Positions 111 and 148 each coordinate substrate.

This sequence belongs to the transferase hexapeptide repeat family. As to quaternary structure, homotrimer.

It is found in the cytoplasm. The catalysed reaction is (S)-2,3,4,5-tetrahydrodipicolinate + succinyl-CoA + H2O = (S)-2-succinylamino-6-oxoheptanedioate + CoA. Its pathway is amino-acid biosynthesis; L-lysine biosynthesis via DAP pathway; LL-2,6-diaminopimelate from (S)-tetrahydrodipicolinate (succinylase route): step 1/3. This chain is 2,3,4,5-tetrahydropyridine-2,6-dicarboxylate N-succinyltransferase, found in Mesorhizobium japonicum (strain LMG 29417 / CECT 9101 / MAFF 303099) (Mesorhizobium loti (strain MAFF 303099)).